The sequence spans 743 residues: Putative metallophosphoesterase At3g03305 (743 aa).

The signal sequence occupies residues 1 to 40 (MESIGDDDELRSKTVSLPRRISFTILLLLLLISLSTRVSG). The a divalent metal cation site is built by Asp-66, His-68, and Asp-101. The next 5 membrane-spanning stretches (helical) occupy residues 514–534 (ILWPALYSLFLVFLIPKCIII), 565–585 (MPVVWFGYMAYLFYLIFFPWF), 623–643 (VMVVVIPHVVFVVIPSVLVVC), 687–704 (LFRKSVLLASLALYWKHF), and 716–736 (MNVVHFPGYSLVVPLLLLYVI).

Belongs to the metallophosphoesterase superfamily. Requires a divalent metal cation as cofactor.

It is found in the membrane. This is Putative metallophosphoesterase At3g03305 from Arabidopsis thaliana (Mouse-ear cress).